The sequence spans 319 residues: Acetyl esterase (319 aa).

The Involved in the stabilization of the negatively charged intermediate by the formation of the oxyanion hole signature appears at 91 to 93 (HGG). Active-site residues include S165, D262, and H292.

The protein belongs to the 'GDXG' lipolytic enzyme family. Homodimer. Interacts with MalT and MelA.

It localises to the cytoplasm. Its function is as follows. Displays esterase activity towards short chain fatty esters (acyl chain length of up to 8 carbons). Able to hydrolyze triacetylglycerol (triacetin) and tributyrylglycerol (tributyrin), but not trioleylglycerol (triolein) or cholesterol oleate. Negatively regulates MalT activity by antagonizing maltotriose binding. Inhibits MelA galactosidase activity. This Escherichia coli O157:H7 protein is Acetyl esterase.